The chain runs to 266 residues: Putative expansin-A30 (266 aa).

Residues Met-1–Ala-24 form the signal peptide. Positions Gly-55–Gly-170 constitute an Expansin-like EG45 domain. The Expansin-like CBD domain occupies Tyr-180–Ala-261.

Belongs to the expansin family. Expansin A subfamily.

The protein localises to the secreted. It is found in the cell wall. It localises to the membrane. Its function is as follows. May cause loosening and extension of plant cell walls by disrupting non-covalent bonding between cellulose microfibrils and matrix glucans. No enzymatic activity has been found. May be required for rapid internodal elongation in deepwater rice during submergence. The chain is Putative expansin-A30 (EXPA30) from Oryza sativa subsp. japonica (Rice).